Reading from the N-terminus, the 289-residue chain is 3-methyl-2-oxobutanoate hydroxymethyltransferase (289 aa).

Over residues 1-10 (MSDSKSSAST) the composition is skewed to low complexity. The disordered stretch occupies residues 1 to 33 (MSDSKSSASTSEDRLYGSAPSHDVPKRKTRTHH). 2 residues coordinate Mg(2+): Asp-70 and Asp-109. 3-methyl-2-oxobutanoate-binding positions include 70 to 71 (DS), Asp-109, and Lys-139. Glu-141 provides a ligand contact to Mg(2+). The active-site Proton acceptor is the Glu-207.

Belongs to the PanB family. As to quaternary structure, homodecamer; pentamer of dimers. It depends on Mg(2+) as a cofactor.

It localises to the cytoplasm. The enzyme catalyses 3-methyl-2-oxobutanoate + (6R)-5,10-methylene-5,6,7,8-tetrahydrofolate + H2O = 2-dehydropantoate + (6S)-5,6,7,8-tetrahydrofolate. Its pathway is cofactor biosynthesis; (R)-pantothenate biosynthesis; (R)-pantoate from 3-methyl-2-oxobutanoate: step 1/2. Catalyzes the reversible reaction in which hydroxymethyl group from 5,10-methylenetetrahydrofolate is transferred onto alpha-ketoisovalerate to form ketopantoate. This Rhodococcus jostii (strain RHA1) protein is 3-methyl-2-oxobutanoate hydroxymethyltransferase.